A 231-amino-acid chain; its full sequence is Small ribosomal subunit protein uS3c (231 aa).

Positions 39 to 123 (LRNFIKKKYI…HLRLSVKPLR (85 aa)) constitute a KH type-2 domain.

This sequence belongs to the universal ribosomal protein uS3 family. Part of the 30S ribosomal subunit.

The protein localises to the plastid. It is found in the chloroplast. This Chlorella vulgaris (Green alga) protein is Small ribosomal subunit protein uS3c (rps3).